Consider the following 360-residue polypeptide: UDP-N-acetylglucosamine--N-acetylmuramyl-(pentapeptide) pyrophosphoryl-undecaprenol N-acetylglucosamine transferase (360 aa).

Residues 14 to 16 (TGG), N131, R167, S195, I249, and Q294 contribute to the UDP-N-acetyl-alpha-D-glucosamine site.

The protein belongs to the glycosyltransferase 28 family. MurG subfamily.

Its subcellular location is the cell inner membrane. It carries out the reaction di-trans,octa-cis-undecaprenyl diphospho-N-acetyl-alpha-D-muramoyl-L-alanyl-D-glutamyl-meso-2,6-diaminopimeloyl-D-alanyl-D-alanine + UDP-N-acetyl-alpha-D-glucosamine = di-trans,octa-cis-undecaprenyl diphospho-[N-acetyl-alpha-D-glucosaminyl-(1-&gt;4)]-N-acetyl-alpha-D-muramoyl-L-alanyl-D-glutamyl-meso-2,6-diaminopimeloyl-D-alanyl-D-alanine + UDP + H(+). Its pathway is cell wall biogenesis; peptidoglycan biosynthesis. Its function is as follows. Cell wall formation. Catalyzes the transfer of a GlcNAc subunit on undecaprenyl-pyrophosphoryl-MurNAc-pentapeptide (lipid intermediate I) to form undecaprenyl-pyrophosphoryl-MurNAc-(pentapeptide)GlcNAc (lipid intermediate II). The protein is UDP-N-acetylglucosamine--N-acetylmuramyl-(pentapeptide) pyrophosphoryl-undecaprenol N-acetylglucosamine transferase of Polaromonas naphthalenivorans (strain CJ2).